Reading from the N-terminus, the 516-residue chain is GMP synthase [glutamine-hydrolyzing] (516 aa).

The Glutamine amidotransferase type-1 domain occupies Lys-6–Gly-199. The Nucleophile role is filled by Cys-83. Catalysis depends on residues His-173 and Glu-175. The 192-residue stretch at Trp-200–Arg-391 folds into the GMPS ATP-PPase domain. Ser-227–Thr-233 contributes to the ATP binding site.

In terms of assembly, homodimer.

The catalysed reaction is XMP + L-glutamine + ATP + H2O = GMP + L-glutamate + AMP + diphosphate + 2 H(+). It participates in purine metabolism; GMP biosynthesis; GMP from XMP (L-Gln route): step 1/1. Its function is as follows. Catalyzes the synthesis of GMP from XMP. This is GMP synthase [glutamine-hydrolyzing] from Solidesulfovibrio magneticus (strain ATCC 700980 / DSM 13731 / RS-1) (Desulfovibrio magneticus).